We begin with the raw amino-acid sequence, 128 residues long: Cytochrome c' (128 aa).

Residues Q13, Q17, E69, T70, C118, C121, and H122 each coordinate heme c.

As to quaternary structure, homodimer. Binds 1 heme c group covalently per subunit.

Cytochrome c' is the most widely occurring bacterial c-type cytochrome. Cytochromes c' are high-spin proteins and the heme has no sixth ligand. Their exact function is not known. In Magnetospirillum molischianum (Rhodospirillum molischianum), this protein is Cytochrome c'.